Here is a 270-residue protein sequence, read N- to C-terminus: 4-hydroxy-tetrahydrodipicolinate reductase (270 aa).

Residues Gly11–Met16 and Glu37 contribute to the NAD(+) site. An NADP(+)-binding site is contributed by Arg38. NAD(+)-binding positions include Gly101 to Thr103 and Ala125 to Met128. The active-site Proton donor/acceptor is the His158. Position 159 (His159) interacts with (S)-2,3,4,5-tetrahydrodipicolinate. Lys162 functions as the Proton donor in the catalytic mechanism. Gly168–Thr169 is a (S)-2,3,4,5-tetrahydrodipicolinate binding site.

It belongs to the DapB family.

It is found in the cytoplasm. The catalysed reaction is (S)-2,3,4,5-tetrahydrodipicolinate + NAD(+) + H2O = (2S,4S)-4-hydroxy-2,3,4,5-tetrahydrodipicolinate + NADH + H(+). The enzyme catalyses (S)-2,3,4,5-tetrahydrodipicolinate + NADP(+) + H2O = (2S,4S)-4-hydroxy-2,3,4,5-tetrahydrodipicolinate + NADPH + H(+). It functions in the pathway amino-acid biosynthesis; L-lysine biosynthesis via DAP pathway; (S)-tetrahydrodipicolinate from L-aspartate: step 4/4. Its function is as follows. Catalyzes the conversion of 4-hydroxy-tetrahydrodipicolinate (HTPA) to tetrahydrodipicolinate. The chain is 4-hydroxy-tetrahydrodipicolinate reductase from Shewanella amazonensis (strain ATCC BAA-1098 / SB2B).